A 1184-amino-acid polypeptide reads, in one-letter code: MSTLGNSTVKPTNAEFPGLHAMERYKPATSESLYVKGHYGPHPHKEHPAAYVAAKTGFNATSRRQSVREHHSSHEGSAQLNPDRILYMSAGAVTAAVPNKEHTDNVTTSQTIRYETSSQPSQEVYHPHAGKAAQSAHVMNSTESRPSSAHVSSSYTQKPFAFPLGPVFATSSQAAASETALPSGYEPDEARFIGASQLAKLSASHAHQTPAQTVDDDVPLPTRMAATELVGHIPLRAANYANEYSQDVPASTHRAASELVHGVPMRASGINDPKHDLDAATRHNINSVAAASYVAARSRVIEEEEEPPNEVKERMDYEADAQRRIRKMNVFGSAGAALRERTQQDLMANEQEHSGEFAGFSRNLTNTAAAPTTYEYKRPTSSYTAKDATSKVYRSNTYKPKSSVNGSVYRSKSVKSTTSHNKVPERNSVPAYNEKLMHSSAANAAILSHKNYSPPVQPTRDDEVSQEDARVKEIVRGMKLPLTSSSLSAAAYRPMEKQDPATVERHHIQAEATQRVRDMKLDLTKLESKTNDEIRSYRPRNVVIKPYAAATPPKNIPSTYRAPQAPSVLSPVVTASEGDFELDGITPERQQTMTRSTYQESSQRPFHEDPFRTHPGLLQAVARNHRNSLANIDERIMRQNQAATANTNTVSETDIEALERRLSKAYRMEAQEEAYAINIGGGRVISPEELEEIARRNVDPMVSELSERAAQERERKEQAKEAKRLKKLAKEEKRLKKKEEKARKAEEKRLQKERAKYAKQMSRESAHADQAIANTGPVAPPYFEHETEPSHYEEEEEEEPEERREESSHFSESSGNNEFEETEQEYTHGYGNDVLVQRTDVVNNFGESSHAHDNAVNEKRDLGRNGFGDVDEQDATEVYRHSIERIVPGDYLHDEKTRDTLTRESPAFRSEEAVVEVADEDHPHASEAERAHSYSNRKQASSESSPESQSTHYNDYEGTEDNIVRQTTTVDEDGHQEQTTSTTKVAHPIPVSNGLSSPPRERLDDNAKEILSRSSPKSPVAWFKRKFKNRKDKAAVKRMLEEDSSKQLSSGRDVVAPTSVNHDVSHVGESTKPAVNNSTKPVAVTSKNGHSRNGSHAAHSNNVIGTQPHVNVSAVPNTGNLKDALEGSAVSKTDDVDNVVSGHSNVNGVSKSRPNIVERSEDYVISHLPEQSRAPIGAAFQEDL.

Disordered regions lie at residues 115–152 and 397–426; these read ETSSQPSQEVYHPHAGKAAQSAHVMNSTESRPSSAHVS and TYKPKSSVNGSVYRSKSVKSTTSHNKVPER. Polar residues-rich tracts occupy residues 137–152 and 397–421; these read HVMNSTESRPSSAHVS and TYKPKSSVNGSVYRSKSVKSTTSHN. Residue serine 686 is modified to Phosphoserine. 4 stretches are compositionally biased toward basic and acidic residues: residues 705-767, 783-792, 849-863, and 891-902; these read LSER…ESAH, FEHETEPSHY, SHAHDNAVNEKRDLG, and YLHDEKTRDTLT. Disordered stretches follow at residues 705-870 and 890-1017; these read LSER…FGDV and DYLH…SSPK. Serine 905 carries the post-translational modification Phosphoserine. The span at 920–932 shows a compositional bias: basic and acidic residues; that stretch reads EDHPHASEAERAH. Residues 941 to 950 are compositionally biased toward low complexity; sequence SSESSPESQS. The segment covering 999 to 1011 has biased composition (basic and acidic residues); that stretch reads PRERLDDNAKEIL. Serine 1018 carries the post-translational modification Phosphoserine. Disordered stretches follow at residues 1029–1107 and 1135–1154; these read NRKD…IGTQ and DVDNVVSGHSNVNGVSKSRP. Positions 1032–1045 are enriched in basic and acidic residues; it reads DKAAVKRMLEEDSS. Over residues 1073-1107 the composition is skewed to polar residues; that stretch reads PAVNNSTKPVAVTSKNGHSRNGSHAAHSNNVIGTQ. Residues 1138-1150 show a composition bias toward low complexity; the sequence is NVVSGHSNVNGVS.

The protein localises to the cytoplasm. This is an uncharacterized protein from Schizosaccharomyces pombe (strain 972 / ATCC 24843) (Fission yeast).